We begin with the raw amino-acid sequence, 403 residues long: Ribosomal RNA large subunit methyltransferase I (403 aa).

Residues 9–88 (YPRLVLSKGR…ESIDIAFFTR (80 aa)) form the PUA domain.

It belongs to the methyltransferase superfamily. RlmI family.

It is found in the cytoplasm. The catalysed reaction is cytidine(1962) in 23S rRNA + S-adenosyl-L-methionine = 5-methylcytidine(1962) in 23S rRNA + S-adenosyl-L-homocysteine + H(+). Functionally, specifically methylates the cytosine at position 1962 (m5C1962) of 23S rRNA. The chain is Ribosomal RNA large subunit methyltransferase I from Salmonella schwarzengrund (strain CVM19633).